A 335-amino-acid polypeptide reads, in one-letter code: Protein FATTY ACID EXPORT 3, chloroplastic (335 aa).

The N-terminal 72 residues, 1-72 (MMSIPMELMS…PEVLLNRSVV (72 aa)), are a transit peptide targeting the chloroplast. The interval 82 to 101 (GESGVEVGKEKSDIDVEDDT) is disordered. Positions 88–101 (VGKEKSDIDVEDDT) are enriched in basic and acidic residues. Residues 101–160 (TSKEAWKQTLESFKEQVSKMQSVSSEAYSVNSQKAMTVLKETSEQLRIQAEKAKEELGTK) are a coiled coil. 3 consecutive transmembrane segments (helical) span residues 205-225 (FHVG…NFMV), 228-248 (SIPA…LSLA), and 286-306 (STFL…FYLY). The disordered stretch occupies residues 316-335 (PTLEDGGEDESSDGFVRSEG).

This sequence belongs to the TMEM14 family.

It is found in the plastid. The protein localises to the chloroplast membrane. Its function is as follows. May be involved in free fatty acids export from the plastids. In Arabidopsis thaliana (Mouse-ear cress), this protein is Protein FATTY ACID EXPORT 3, chloroplastic.